The primary structure comprises 1158 residues: ATP-dependent helicase/deoxyribonuclease subunit B (1158 aa).

Positions 1–275 (MTLHAYLGRA…QYFNQLYRFN (275 aa)) constitute a UvrD-like helicase ATP-binding domain. 8–15 (GRAGTGKS) is a binding site for ATP. In terms of domain architecture, UvrD-like helicase C-terminal spans 269–583 (NQLYRFNNQD…SIGTMDLAKV (315 aa)). [4Fe-4S] cluster is bound by residues C784, C1112, C1115, and C1121.

It belongs to the helicase family. AddB/RexB type 1 subfamily. Heterodimer of AddA and AddB. Requires Mg(2+) as cofactor. It depends on [4Fe-4S] cluster as a cofactor.

Functionally, the heterodimer acts as both an ATP-dependent DNA helicase and an ATP-dependent, dual-direction single-stranded exonuclease. Recognizes the chi site generating a DNA molecule suitable for the initiation of homologous recombination. The AddB subunit has 5' -&gt; 3' nuclease activity but not helicase activity. This chain is ATP-dependent helicase/deoxyribonuclease subunit B, found in Staphylococcus aureus (strain MSSA476).